A 1860-amino-acid polypeptide reads, in one-letter code: Collagen alpha-1(XXVII) chain (1860 aa).

The signal sequence occupies residues 1–41; that stretch reads MGAGSARGARGTAAAAAARGGGFLFSWILVSFACHLASTQG. A propeptide spans 42–624 (N-terminal propeptide); the sequence is APEDVDILQR…AGSTPFPLLM (583 aa). The region spanning 71–236 is the Laminin G-like domain; it reads QSGFIFTQRA…NYCTHLRKQC (166 aa). Asn-271 is a glycosylation site (N-linked (GlcNAc...) asparagine). Disordered stretches follow at residues 278–608, 625–772, and 851–1625; these read ALGS…TSSG, GPPG…GSDG, and LKGD…IQLQ. 2 stretches are compositionally biased toward polar residues: residues 298–309 and 386–409; these read TKPQRTSPTNPH and HPTQ…QVPP. Pro residues predominate over residues 432-445; the sequence is MPRPPPPSTRPLPP. 2 stretches are compositionally biased toward low complexity: residues 446 to 457 and 485 to 505; these read TTSSSKKPIPTL and TALS…RPPA. Residues 509 to 518 are compositionally biased toward polar residues; sequence PPTSGTSTPR. Low complexity-rich tracts occupy residues 572-588 and 599-608; these read TTRP…QTTP and SSSPRPTSSG. Collagen-like domains follow at residues 625–679, 688–747, 748–807, 808–867, 871–930, 931–990, 1003–1062, 1066–1125, 1126–1185, 1192–1251, 1258–1317, 1318–1378, 1382–1441, 1442–1501, 1502–1561, and 1562–1621; these read GPPG…GDPG, GAKG…PGPV, GDPG…DGNP, GELG…SGDP, GDKG…KGKP, GARG…PGPV, GEPG…RGAK, GPRG…PGTK, GLPG…IGQR, GDSG…QGEK, GAKG…KGIV, GPLG…RGKP, GQPG…EGIA, GPDG…PGQL, GPPG…QGPR, and GPPG…PGGP. Residues 625–1618 are triple-helical region; that stretch reads GPPGPKGDCG…RGRPGPPGPP (994 aa). Over residues 654–669 the composition is skewed to pro residues; it reads RGPPGPYGNPGLPGPP. Positions 714 to 734 are enriched in low complexity; that stretch reads PGPAGHPGEQGQPGPEGSPGA. 2 stretches are compositionally biased toward low complexity: residues 911-924 and 932-944; these read FPGD…NGPE and ARGL…QLGP. Gly residues predominate over residues 1033 to 1042; it reads GMPGGMGTPG. Residues 1043 to 1053 show a composition bias toward pro residues; the sequence is EPGPQGPPGSR. Over residues 1130–1142 the composition is skewed to pro residues; sequence EPGPQGPQGPIGP. Basic and acidic residues-rich tracts occupy residues 1202 to 1220 and 1241 to 1253; these read LKGD…EKGQ and PEGK…EKGR. Basic and acidic residues-rich tracts occupy residues 1326–1338 and 1350–1360; these read KGEK…DGKA and PVGDRGDRGEP. Positions 1449-1458 are enriched in low complexity; sequence RDGQAGQQGE. The span at 1572 to 1587 shows a compositional bias: low complexity; that stretch reads IVGPLGILGPSGLPGP. Over residues 1603–1620 the composition is skewed to pro residues; sequence RGPPGPRGRPGPPGPPGG. Positions 1622 to 1860 are cleaved as a propeptide — C-terminal propeptide; sequence IQLQQDDLGA…RLEVGPACFL (239 aa). Positions 1660–1860 constitute a Fibrillar collagen NC1 domain; sequence GEIFKTLHYL…RLEVGPACFL (201 aa). 3 disulfide bridges follow: Cys-1690–Cys-1722, Cys-1731–Cys-1858, and Cys-1767–Cys-1811. Asp-1708, Asn-1710, Cys-1713, and Asp-1716 together coordinate Ca(2+). An N-linked (GlcNAc...) asparagine glycan is attached at Asn-1769.

Belongs to the fibrillar collagen family.

It localises to the secreted. The protein resides in the extracellular space. It is found in the extracellular matrix. Functionally, plays a role during the calcification of cartilage and the transition of cartilage to bone. In Homo sapiens (Human), this protein is Collagen alpha-1(XXVII) chain (COL27A1).